The chain runs to 188 residues: UPF0301 protein Tcr_1827 (188 aa).

The protein belongs to the UPF0301 (AlgH) family.

This chain is UPF0301 protein Tcr_1827, found in Hydrogenovibrio crunogenus (strain DSM 25203 / XCL-2) (Thiomicrospira crunogena).